A 415-amino-acid chain; its full sequence is MGKIQIEDIIIANQTLKDVVVHTPLQKNQVLSERYECNVYLKREDMQVVRSFKIRGAFHQISSIPKEELNNGVVCASAGNHAQGVAYSCHTLQIPGKIFMPTTTPRQKVDQVKFFGKEYVEVILTGDTFDDSFNEAKEYGIKHKMTFIHPFDQEKIVAGQGTVGMEIMNDIDDNIDYLFCSIGGGGLISGVGTYIKSISPRTKVIGCEPAGAPAMKESLKQGKVIELEKIDKFVDGAAVKKVGEIPFEICQKILEDIVLVPEGKICTTILNLYNQDAIVAEPAGAMPIAALDFFKDEIKGKTVVCVLSGGNNDIGRMQEMRERSLIYEGLQHYFIIQFPQRAGALKEFILDVLGPDDDITRFEYTKKNNKSNGPVLIGIELKCDEDYHRLMDRLNKKGFEYREINKNESLFNLLI.

Lys53 carries the N6-(pyridoxal phosphate)lysine modification. Residues Asn80, 183-187 (GGGGL), and Ser308 each bind pyridoxal 5'-phosphate. An ACT-like domain is found at 332 to 406 (HYFIIQFPQR…KGFEYREINK (75 aa)).

Belongs to the serine/threonine dehydratase family. Homotetramer. The cofactor is pyridoxal 5'-phosphate.

The enzyme catalyses L-threonine = 2-oxobutanoate + NH4(+). The protein operates within amino-acid biosynthesis; L-isoleucine biosynthesis; 2-oxobutanoate from L-threonine: step 1/1. Functionally, catalyzes the anaerobic formation of alpha-ketobutyrate and ammonia from threonine in a two-step reaction. The first step involved a dehydration of threonine and a production of enamine intermediates (aminocrotonate), which tautomerizes to its imine form (iminobutyrate). Both intermediates are unstable and short-lived. The second step is the nonenzymatic hydrolysis of the enamine/imine intermediates to form 2-ketobutyrate and free ammonia. In the low water environment of the cell, the second step is accelerated by RidA. The polypeptide is L-threonine dehydratase biosynthetic IlvA (ilvA) (Halalkalibacterium halodurans (strain ATCC BAA-125 / DSM 18197 / FERM 7344 / JCM 9153 / C-125) (Bacillus halodurans)).